Consider the following 270-residue polypeptide: Myelin protein zero-like protein 1 (270 aa).

Positions 1–35 (MAEAVGAVALIAAPARRRWLWSVLAAMLGLLTARI) are cleaved as a signal peptide. Positions 36 to 151 (SALEVHTPKE…DIVVRPGHIR (116 aa)) constitute an Ig-like V-type domain. The Extracellular portion of the chain corresponds to 36-162 (SALEVHTPKE…HVVEIDNLLV (127 aa)). N50 and N130 each carry an N-linked (GlcNAc...) asparagine glycan. Residues C58 and C135 are joined by a disulfide bond. The chain crosses the membrane as a helical span at residues 163-183 (FLVWVVVGTVTAVVLGLTLLI). At 184–270 (SLVLVVLYRR…SVVYADIRKD (87 aa)) the chain is on the cytoplasmic side. The segment at 201-257 (TGCSTSERLSPVKQAPRKCPSDTEGLVKSPPSAGSHQGPVIYAQLDHSGGHHSGKIN) is disordered. S204, S206, S210, and S221 each carry phosphoserine. The ITIM motif 1 signature appears at 240–245 (VIYAQL). Y242 is subject to Phosphotyrosine. The residue at position 261 (S261) is a Phosphoserine. Positions 262-267 (VVYADI) match the ITIM motif 2 motif. Y264 carries the phosphotyrosine modification.

Belongs to the myelin P0 protein family. Interacts with phosphorylated PTPN11/SHP-2. In terms of processing, phosphorylated on tyrosine residues upon stimulation with pervanadate and concanavalin-A (ConA). Phosphorylation at Tyr-242 and Tyr-264 is required for interaction with PTPN11/SHP-2. Dephosphorylated by PTPN11/SHP-2 (in vitro).

It is found in the membrane. Functionally, cell surface receptor, which is involved in signal transduction processes. Recruits PTPN11/SHP-2 to the cell membrane and is a putative substrate of PTPN11/SHP-2. Is a major receptor for concanavalin-A (ConA) and is involved in cellular signaling induced by ConA, which probably includes Src family tyrosine-protein kinases. Isoform 2 seems to have a dominant negative role; it blocks tyrosine phosphorylation of MPZL1 induced by ConA. Isoform 1, but not isoform 2, may be involved in regulation of integrin-mediated cell motility. In Mus musculus (Mouse), this protein is Myelin protein zero-like protein 1 (Mpzl1).